The primary structure comprises 147 residues: MKVILKENIENLGHIGDIVKVAPGYARNYLLPKGFALEATTKNAKALDHAKKHLEYKKNKVLEQARVLAAKIEGLALNLSHQAGEEGKLFGAVTNMELAEQMKAQGIEIDRKKIILAEPIKHLGEFTATVKIHPEVNATLKVTVSKA.

This sequence belongs to the bacterial ribosomal protein bL9 family.

Functionally, binds to the 23S rRNA. This chain is Large ribosomal subunit protein bL9, found in Geotalea uraniireducens (strain Rf4) (Geobacter uraniireducens).